The following is a 250-amino-acid chain: MAMSKIMSLTGLLASASLVAGHGYVSGVVVDGQYYGGYLVDKYAYSDNPPETIGWSTTATDLGFVDGTGYQSPDIICHKDGKPGALSAEVAAGGEIELQWTEWPESHHGPVLNYLAPCGGDCSAVDKTSLEFFKIEAKGLIDGSSPPGHWATDDLISNNNSWTVTIPASVQEGNYVLRHEIIGLHSAGQKDGAQNYPQCINIKVTGGGAATPAGTAGEALYKDTDPGILFDIYSDLSGGYPIPGPEVFSA.

Positions 1–21 (MAMSKIMSLTGLLASASLVAG) are cleaved as a signal peptide. H22 and H107 together coordinate Cu(2+). Cystine bridges form between C77-C199 and C118-C122. Residue N159 is glycosylated (N-linked (GlcNAc...) asparagine). Residues H185 and Q194 each coordinate O2. Y196 serves as a coordination point for Cu(2+).

It belongs to the polysaccharide monooxygenase AA9 family. Cu(2+) is required as a cofactor.

It is found in the secreted. The enzyme catalyses [(1-&gt;4)-beta-D-glucosyl]n+m + reduced acceptor + O2 = 4-dehydro-beta-D-glucosyl-[(1-&gt;4)-beta-D-glucosyl]n-1 + [(1-&gt;4)-beta-D-glucosyl]m + acceptor + H2O.. Its function is as follows. Lytic polysaccharide monooxygenase (LPMO) that depolymerizes crystalline and amorphous polysaccharides via the oxidation of scissile alpha- or beta-(1-4)-glycosidic bonds, yielding C1 or C4 oxidation products. Catalysis by LPMOs requires the reduction of the active-site copper from Cu(II) to Cu(I) by a reducing agent and H(2)O(2) or O(2) as a cosubstrate. This is AA9 family lytic polysaccharide monooxygenase E from Aspergillus tamarii.